The chain runs to 368 residues: MSETAKKVIVGMSGGVDSSVSAWLLQQQGYQVEGLFMKNWEEDDGEEYCTAAADLADAQAVCDKLGIELHTVNFAAEYWDNVFELFLAEYKAGRTPNPDILCNKEIKFKAFLEFAAEDLGADYIATGHYVRRADVDGKSRLLRGLDSNKDQSYFLYTLSHEQIAQSLFPVGELEKPQVRKIAEDLGLVTAKKKDSTGICFIGERKFREFLGRYLPAQPGKIITVDGDEIGEHQGLMYHTLGQRKGLGIGGTKDGTEEPWYVVDKDVENNILIVAQGHEHPRLMSVGLIAQQLHWVDREPFTGTMRCTVKTRYRQTDIPCTVKALDADRIEVIFDEPVAAVTPGQSAVFYNGEVCLGGGIIEQRLPLPV.

Residues 11 to 18 (GMSGGVDS) and Met37 each bind ATP. The segment at 97–99 (NPD) is interaction with target base in tRNA. Catalysis depends on Cys102, which acts as the Nucleophile. Residues Cys102 and Cys199 are joined by a disulfide bond. Gly127 contacts ATP. An interaction with tRNA region spans residues 149–151 (KDQ). Cys199 acts as the Cysteine persulfide intermediate in catalysis. The interaction with tRNA stretch occupies residues 311–312 (RY).

The protein belongs to the MnmA/TRMU family. Interacts with TusE.

The protein localises to the cytoplasm. The enzyme catalyses S-sulfanyl-L-cysteinyl-[protein] + uridine(34) in tRNA + AH2 + ATP = 2-thiouridine(34) in tRNA + L-cysteinyl-[protein] + A + AMP + diphosphate + H(+). Its function is as follows. Catalyzes the 2-thiolation of uridine at the wobble position (U34) of tRNA(Lys), tRNA(Glu) and tRNA(Gln), leading to the formation of s(2)U34, the first step of tRNA-mnm(5)s(2)U34 synthesis. Sulfur is provided by IscS, via a sulfur-relay system. Binds ATP and its substrate tRNAs. This chain is tRNA-specific 2-thiouridylase MnmA, found in Escherichia coli O1:K1 / APEC.